We begin with the raw amino-acid sequence, 243 residues long: Small ribosomal subunit protein uS5 (243 aa).

2 stretches are compositionally biased toward basic and acidic residues: residues 1–21 (MPID…EGQK) and 34–46 (LEEK…DHKG). The interval 1–85 (MPIDKKQEKN…NFKKNANKKP (85 aa)) is disordered. The region spanning 89 to 152 (FEEKIVNIAR…KDAQNNLIRV (64 aa)) is the S5 DRBM domain.

This sequence belongs to the universal ribosomal protein uS5 family. Part of the 30S ribosomal subunit. Contacts proteins S4 and S8.

Functionally, with S4 and S12 plays an important role in translational accuracy. Its function is as follows. Located at the back of the 30S subunit body where it stabilizes the conformation of the head with respect to the body. The polypeptide is Small ribosomal subunit protein uS5 (Mycoplasma mobile (strain ATCC 43663 / 163K / NCTC 11711) (Mesomycoplasma mobile)).